A 308-amino-acid chain; its full sequence is Elongation factor Ts (308 aa).

An involved in Mg(2+) ion dislocation from EF-Tu region spans residues 80–83; sequence TDFV.

This sequence belongs to the EF-Ts family.

It localises to the cytoplasm. In terms of biological role, associates with the EF-Tu.GDP complex and induces the exchange of GDP to GTP. It remains bound to the aminoacyl-tRNA.EF-Tu.GTP complex up to the GTP hydrolysis stage on the ribosome. The polypeptide is Elongation factor Ts (Rhizobium johnstonii (strain DSM 114642 / LMG 32736 / 3841) (Rhizobium leguminosarum bv. viciae)).